The sequence spans 330 residues: Ketol-acid reductoisomerase (NADP(+)) (330 aa).

Positions 2-182 (ARMYYDADAN…GGTRAGILET (181 aa)) constitute a KARI N-terminal Rossmann domain. NADP(+) contacts are provided by residues 25 to 28 (YGSQ), Ser51, Ser53, and 83 to 86 (DEFQ). The active site involves His108. Gly134 is an NADP(+) binding site. One can recognise a KARI C-terminal knotted domain in the interval 183–328 (SFREETETDL…KDLRAMFSWL (146 aa)). 4 residues coordinate Mg(2+): Asp191, Glu195, Glu227, and Glu231. A substrate-binding site is contributed by Ser252.

Belongs to the ketol-acid reductoisomerase family. It depends on Mg(2+) as a cofactor.

The enzyme catalyses (2R)-2,3-dihydroxy-3-methylbutanoate + NADP(+) = (2S)-2-acetolactate + NADPH + H(+). It carries out the reaction (2R,3R)-2,3-dihydroxy-3-methylpentanoate + NADP(+) = (S)-2-ethyl-2-hydroxy-3-oxobutanoate + NADPH + H(+). The protein operates within amino-acid biosynthesis; L-isoleucine biosynthesis; L-isoleucine from 2-oxobutanoate: step 2/4. It participates in amino-acid biosynthesis; L-valine biosynthesis; L-valine from pyruvate: step 2/4. Functionally, involved in the biosynthesis of branched-chain amino acids (BCAA). Catalyzes an alkyl-migration followed by a ketol-acid reduction of (S)-2-acetolactate (S2AL) to yield (R)-2,3-dihydroxy-isovalerate. In the isomerase reaction, S2AL is rearranged via a Mg-dependent methyl migration to produce 3-hydroxy-3-methyl-2-ketobutyrate (HMKB). In the reductase reaction, this 2-ketoacid undergoes a metal-dependent reduction by NADPH to yield (R)-2,3-dihydroxy-isovalerate. This Synechococcus elongatus (strain ATCC 33912 / PCC 7942 / FACHB-805) (Anacystis nidulans R2) protein is Ketol-acid reductoisomerase (NADP(+)).